The primary structure comprises 276 residues: Large ribosomal subunit protein uL2 (276 aa).

Residues 212–276 are disordered; the sequence is NRHRGIRPQT…KLIISRKKHK (65 aa). Over residues 257-276 the composition is skewed to basic residues; it reads YKTRKKKASDKLIISRKKHK.

Belongs to the universal ribosomal protein uL2 family. As to quaternary structure, part of the 50S ribosomal subunit. Forms a bridge to the 30S subunit in the 70S ribosome.

Functionally, one of the primary rRNA binding proteins. Required for association of the 30S and 50S subunits to form the 70S ribosome, for tRNA binding and peptide bond formation. It has been suggested to have peptidyltransferase activity; this is somewhat controversial. Makes several contacts with the 16S rRNA in the 70S ribosome. This chain is Large ribosomal subunit protein uL2, found in Helicobacter acinonychis (strain Sheeba).